The chain runs to 496 residues: Probable cytosol aminopeptidase (496 aa).

Residues lysine 262 and aspartate 267 each contribute to the Mn(2+) site. Residue lysine 274 is part of the active site. 3 residues coordinate Mn(2+): aspartate 285, aspartate 344, and glutamate 346. The active site involves arginine 348.

This sequence belongs to the peptidase M17 family. It depends on Mn(2+) as a cofactor.

The protein resides in the cytoplasm. It catalyses the reaction Release of an N-terminal amino acid, Xaa-|-Yaa-, in which Xaa is preferably Leu, but may be other amino acids including Pro although not Arg or Lys, and Yaa may be Pro. Amino acid amides and methyl esters are also readily hydrolyzed, but rates on arylamides are exceedingly low.. The catalysed reaction is Release of an N-terminal amino acid, preferentially leucine, but not glutamic or aspartic acids.. Its function is as follows. Presumably involved in the processing and regular turnover of intracellular proteins. Catalyzes the removal of unsubstituted N-terminal amino acids from various peptides. The polypeptide is Probable cytosol aminopeptidase (Rhizobium etli (strain CIAT 652)).